The following is a 221-amino-acid chain: Transcriptional regulatory protein QseB (221 aa).

Positions 2–116 (RILLIEDDNL…EVAARLQALI (115 aa)) constitute a Response regulatory domain. A 4-aspartylphosphate modification is found at Asp51. A DNA-binding region (ompR/PhoB-type) is located at residues 124 to 218 (HSVIEQAGVK…VHGVGYALGQ (95 aa)).

In terms of processing, phosphorylated by QseC.

It is found in the cytoplasm. Member of a two-component regulatory system QseB/QseC. This is Transcriptional regulatory protein QseB (qseB) from Haemophilus influenzae (strain ATCC 51907 / DSM 11121 / KW20 / Rd).